Consider the following 181-residue polypeptide: ATP-dependent protease subunit HslV (181 aa).

The active site involves Thr2. Residues Gly157, Cys160, and Thr163 each contribute to the Na(+) site.

The protein belongs to the peptidase T1B family. HslV subfamily. As to quaternary structure, a double ring-shaped homohexamer of HslV is capped on each side by a ring-shaped HslU homohexamer. The assembly of the HslU/HslV complex is dependent on binding of ATP.

The protein localises to the cytoplasm. It catalyses the reaction ATP-dependent cleavage of peptide bonds with broad specificity.. With respect to regulation, allosterically activated by HslU binding. In terms of biological role, protease subunit of a proteasome-like degradation complex believed to be a general protein degrading machinery. The sequence is that of ATP-dependent protease subunit HslV from Hahella chejuensis (strain KCTC 2396).